The following is a 123-amino-acid chain: Class II hydrophobin 2 (123 aa).

The N-terminal stretch at 1–16 is a signal peptide; it reads MRSFLVIATLAVGAFG. 4 cysteine pairs are disulfide-bonded: Cys-22/Cys-70, Cys-32/Cys-61, Cys-33/Cys-45, and Cys-71/Cys-82.

It belongs to the cerato-ulmin hydrophobin family. In terms of assembly, homodimer. Homodimers further self-assemble to form highly ordered films at water-air interfaces through intermolecular interactions.

It is found in the secreted. It localises to the cell wall. Functionally, aerial growth, conidiation, and dispersal of filamentous fungi in the environment rely upon a capability of their secreting small amphipathic proteins called hydrophobins (HPBs) with low sequence identity. Class I can self-assemble into an outermost layer of rodlet bundles on aerial cell surfaces, conferring cellular hydrophobicity that supports fungal growth, development and dispersal; whereas Class II form highly ordered films at water-air interfaces through intermolecular interactions but contribute nothing to the rodlet structure. Hyd2 is a class II hydrophobin that plays probably a role in intraspecific signaling or hyphal fusion. Not necessary for root adhesion and colonization. Might play an essential role since no deletion mutants could be obtained. This chain is Class II hydrophobin 2, found in Bionectria ochroleuca (Gliocladium roseum).